The sequence spans 446 residues: tRNA-2-methylthio-N(6)-dimethylallyladenosine synthase (446 aa).

An MTTase N-terminal domain is found at Lys-3 to Arg-124. 6 residues coordinate [4Fe-4S] cluster: Cys-12, Cys-48, Cys-87, Cys-162, Cys-166, and Cys-169. The region spanning Tyr-148–Ala-380 is the Radical SAM core domain. In terms of domain architecture, TRAM spans Glu-383 to Thr-446.

The protein belongs to the methylthiotransferase family. MiaB subfamily. As to quaternary structure, monomer. Requires [4Fe-4S] cluster as cofactor.

It localises to the cytoplasm. It catalyses the reaction N(6)-dimethylallyladenosine(37) in tRNA + (sulfur carrier)-SH + AH2 + 2 S-adenosyl-L-methionine = 2-methylsulfanyl-N(6)-dimethylallyladenosine(37) in tRNA + (sulfur carrier)-H + 5'-deoxyadenosine + L-methionine + A + S-adenosyl-L-homocysteine + 2 H(+). In terms of biological role, catalyzes the methylthiolation of N6-(dimethylallyl)adenosine (i(6)A), leading to the formation of 2-methylthio-N6-(dimethylallyl)adenosine (ms(2)i(6)A) at position 37 in tRNAs that read codons beginning with uridine. In Rickettsia canadensis (strain McKiel), this protein is tRNA-2-methylthio-N(6)-dimethylallyladenosine synthase.